We begin with the raw amino-acid sequence, 2036 residues long: MASSADVYVFGDQSTPVLDKLQALVRVKDNALLTSFLGEAFLAVRREIVSLSSLERKSIPEAESLSLLLEGVRRSEPHAALDSAFVCIYEIGYYIDYLARSDKQHPPAAPSLLLGICTGSIAAAAVSCAKDVFEISRLGVEAATVAFRLGMHVRRRAENLGYSTPSSWSMILSSNQEELVSEALKEFSKEKNLTYSSRPYISATGPGFTTISGPPSILESVKSCDTFSGKRLYPAPIYGPYHNSSSYSESSLEHGLASILEDVGFLENEMLIPIISCASGSRLDQLSFGNLLKNVLSSALSQQIRMDLVTDALVETVSGTEATLIPVNAQTTVCSLADWLAKRGATTRIGPTLESLTKDRAEPNLAPGDENKIAIIGFSGRFPEADNLDEFWDLLIRGLDVHKPVPEERFARDHYDPTGQRKNTSQVQYGCWLKSAGYFDTQFFHMSPKEAMQTDPAQRLALLTAYEALEMAGVVPDRTPSTQRNRVGVYYGTTSNDWGEVNSSQDVDTYYIPGANRAFIPGRVNYFFKFTGPSIAVDTACSSSLAAINLAITSLKNRDCDTAIAGGTNVMTNPDNFAGLDRGHFLSRTGNCKAFDDGADGYCRADGIGTLILKRLPDAIADSDPIFGVILGAHTNHSAESVSITRPLADAQEYLFKKLLNETGIHPHDVSYVEMHGTGTQAGDAVEMRSVLNSFAFDHSRPRDKSLYLGSVKANVGHAESASGVLAIIKVLLMMQKNTIPPHCGIKTKINQGFPKDLDHRGVRIALKDSVDWSRPEGGKRRVLVNNFSAAGGNTSLLLEDGPAVHPARQHQDGDARTEHVVAVSARSTKALEENLKALEAYIANSWAPEGELLSQLSYTTTARRVHHSRRVAFVTNGLDDLRKSLLKAATDAGQVKGIPAVSPKVGFLFTGQGAQETAMAIGYYKSFSSFRSDIHQLDSIATLQGLPSVLPLIHGTTPVEDLSAVVVQLGTCIIQISLARFWISLGITPQYVIGHSLGEYAALQIAGVLSVNDAIFLCGHRAALLDKKCTAYTHGMVAVKAAADDLRQHISSDLKVEIACVNGAEDTVLSGPNADIESLCGKLTQAGYKLHKLEIPFAFHSSQVDPILDDLEELASQVGFHEPKLPIVSPLLRTLLTGDTLGPQYIRRHCRETVDFLGAIKMAESQGIMDRSGMCIEIGAHPILTRMVKSIIGQDFRCLASLRRKEDHFKTLADSLCALHLAGFSVNWDEYHRDFASSRNVLQLPKYSWQLANYWMQYKYSWCLTKGDAPVENGPVGAVVQARALRLSDSVHNVIEQVHGDKRSSITVESDMHDPSLLAIAQNHRVNGLTMAPSTLFADIAFTLAKHLIQNHGLDTHTNLPSINNMAVEKALIVGETGPQLFRASLDMDWTTMRGSVRIFSVGANGKQTTLHAVCDVAVENPSSHRESWQSNAYLIQRGIKQLVQGASDGSAHMMRRGLLYKIFSNSVQYGSAFQGIEQVWFDSEGLEGTGKVFMPSGKDTFALNPYCCDSLGHITGFIMNCSDSLDLDDHVYINHGWRTLRLVEPYQCDVQYQTYVKMQAVGSDDSTYSGDVHVLRDGKIIGICGGVTFKKVARKVLEMLLPKPSGAKAKHGVVKHVAPEPVKHVVLTPPSTTSHSVGTTSPPEPTESPVGSASGLIQKALEIIADEIGVDISQLTDTTLLADLGVDSLMSLTILGNFREELDLDIPAAQFYEFSTVQDLKSFLGANDQDFSSSNSEAESSASSAASTSPSDHGDDVVEEVKPVVAEIPRSTSTILQGTKHCSQTLFLFPDGAGSATSYVTLPSISSDMRVIGLNSPYLTKPHEFNCALQDITGSYLNEVRRRQPQGPYHLAGWSAGGVSAFDAARQLVSEGEVVESLILIDSPNPVGLGKLPKRMYDFLEKSGIFGAFEMGEEAQAPPDWLFQHFCVFIEALDRYVPEPFEHGMAPKTTIIWAADGVCKNPDDPRPEAQPDDPRGMNWLLNNREDFGPNGWDEFIGAGNISTMAIENANHFTMMREPIASALCAKIRETMGVN.

Positions 8–242 (YVFGDQSTPV…YPAPIYGPYH (235 aa)) are N-terminal acylcarrier protein transacylase domain (SAT). Residues 370 to 801 (ENKIAIIGFS…GGNTSLLLED (432 aa)) enclose the Ketosynthase family 3 (KS3) domain. Active-site for beta-ketoacyl synthase activity residues include Cys-541, His-676, and His-718. An acyl/malonyl transferases region spans residues 908–1209 (FLFTGQGAQE…LASLRRKEDH (302 aa)). Ser-997 (for acyl/malonyl transferase activity) is an active-site residue. An N-terminal hotdog fold region spans residues 1293–1425 (HNVIEQVHGD…CDVAVENPSS (133 aa)). The PKS/mFAS DH domain occupies 1293–1600 (HNVIEQVHGD…FKKVARKVLE (308 aa)). Positions 1295 to 1599 (VIEQVHGDKR…TFKKVARKVL (305 aa)) are product template (PT) domain. The active-site Proton acceptor; for dehydratase activity is the His-1325. The interval 1452 to 1600 (SAHMMRRGLL…FKKVARKVLE (149 aa)) is C-terminal hotdog fold. Catalysis depends on Asp-1511, which acts as the Proton donor; for dehydratase activity. The interval 1628–1654 (VLTPPSTTSHSVGTTSPPEPTESPVGS) is disordered. Residues 1638–1654 (SVGTTSPPEPTESPVGS) show a composition bias toward low complexity. One can recognise a Carrier domain in the interval 1653 to 1730 (GSASGLIQKA…DLKSFLGAND (78 aa)). O-(pantetheine 4'-phosphoryl)serine is present on Ser-1690. The disordered stretch occupies residues 1733–1758 (FSSSNSEAESSASSAASTSPSDHGDD). Positions 1734–1753 (SSSNSEAESSASSAASTSPS) are enriched in low complexity. Ser-1857 acts as the For thioesterase activity in catalysis.

It functions in the pathway secondary metabolite biosynthesis. Functionally, polyketide synthase; part of the gene cluster that mediates the biosynthesis of bikaverin, a red pigment also considered as a mycotoxin. The first stage is catalyzed by the polyketide synthase bik1, which catalyzes the formation of the intermediate SMA76a also knowm as pre-bikaverin. FAD-dependent monooxygenase bik2 might then be responsible for the oxidation of pre-bikaverin to oxo-pre-bikaverin which is in turn methylated by the O-methyltransferase bik3 to me-oxo-pre-bikaverin. A further cycle of oxydation and methylation by bik2 and bik3 leads to the final product of bikaverin, via a nor-bikaverin intermediate. The protein is Bikaverin polyketide synthase bik1 of Gibberella fujikuroi (strain CBS 195.34 / IMI 58289 / NRRL A-6831) (Bakanae and foot rot disease fungus).